A 267-amino-acid polypeptide reads, in one-letter code: L-aspartate dehydrogenase (267 aa).

The NAD(+) site is built by alanine 124 and asparagine 190. Histidine 218 is a catalytic residue.

This sequence belongs to the L-aspartate dehydrogenase family.

The catalysed reaction is L-aspartate + NADP(+) + H2O = oxaloacetate + NH4(+) + NADPH + H(+). It catalyses the reaction L-aspartate + NAD(+) + H2O = oxaloacetate + NH4(+) + NADH + H(+). It participates in cofactor biosynthesis; NAD(+) biosynthesis; iminoaspartate from L-aspartate (dehydrogenase route): step 1/1. Specifically catalyzes the NAD or NADP-dependent dehydrogenation of L-aspartate to iminoaspartate. This is L-aspartate dehydrogenase from Methanococcus maripaludis (strain DSM 14266 / JCM 13030 / NBRC 101832 / S2 / LL).